Reading from the N-terminus, the 117-residue chain is Large ribosomal subunit protein eL8 (117 aa).

The protein belongs to the eukaryotic ribosomal protein eL8 family. As to quaternary structure, part of the 50S ribosomal subunit. Probably part of the RNase P complex.

The protein resides in the cytoplasm. Functionally, multifunctional RNA-binding protein that recognizes the K-turn motif in ribosomal RNA, the RNA component of RNase P, box H/ACA, box C/D and box C'/D' sRNAs. The protein is Large ribosomal subunit protein eL8 of Methanococcus aeolicus (strain ATCC BAA-1280 / DSM 17508 / OCM 812 / Nankai-3).